The sequence spans 629 residues: tRNA uridine 5-carboxymethylaminomethyl modification enzyme MnmG (629 aa).

11-16 (GGGHAG) is an FAD binding site. 273–287 (GPRYCPSFEDKAVRF) lines the NAD(+) pocket.

The protein belongs to the MnmG family. As to quaternary structure, homodimer. Heterotetramer of two MnmE and two MnmG subunits. The cofactor is FAD.

The protein resides in the cytoplasm. Its function is as follows. NAD-binding protein involved in the addition of a carboxymethylaminomethyl (cmnm) group at the wobble position (U34) of certain tRNAs, forming tRNA-cmnm(5)s(2)U34. The chain is tRNA uridine 5-carboxymethylaminomethyl modification enzyme MnmG from Mycoplasma mycoides subsp. mycoides SC (strain CCUG 32753 / NCTC 10114 / PG1).